A 787-amino-acid polypeptide reads, in one-letter code: MKTEVTENIFEQAWDGFKGTNWRDKASVTRFVQENYKPYDGDESFLAGPTERTLKVKKIIEDTKNHYEEVGFPFDTDRVTSIDKIPAGYIDANDKELELIYGMQNSELFRLNFMPRGGLRVAEKILTEHGLSVDPGLHDVLSQTMTSVNDGIFRAYTSAIRKARHAHTVTGLPDAYSRGRIIGVYARLALYGADYLMKEKAKEWDAITEINDDNIRLKEEINMQYQALQEVVNFGALYGLDVSRPAMNVKEAIQWVNIAYMAVCRVINGAATSLGRVPIVLDIFAERDLARGTFTEQEIQEFVDDFILKLRTMKFARAAAYDELYSGDPTFITTSMAGMGNDGRHRVTKMDYRFLNTLDTIGNAPEPNLTVLWDSKLPYSFKRYSMSMSHKHSSIQYEGVETMAKDGYGEMSCISCCVSPLDPENEEGRHNLQYFGARVNVLKAMLTGLNGGYDDVHKDYKVFDIEPVRDEILDYDTVMENFDKSLNWLTDTYVDAMNIIHYMTDKYNYEAVQMAFLPTKVRANMGFGICGFANTVDSLSAIKYAKVKTLRDENGYIYDYEVEGDFPRYGEDDDRADDIAKLVMKMYHEKLASHKLYKNAEATVSLLTITSNVAYSKQTGNSPVHKGVFLNEDGTVNKSKLEFFSPGANPSNKAKGGWLQNLRSLAKLEFKDANDGISLTTQVSPRALGKTRDEQVDNLVQILDGYFTPGALINGTEFAGQHVNLNVMDLKDVYDKIMRGEDVIVRISGYCVNTKYLTPEQKQELTERVFHEVLSNDDEEVMHTSNI.

One can recognise a PFL domain in the interval 8 to 629 (NIFEQAWDGF…GNSPVHKGVF (622 aa)). Cys-416 acts as the S-acetylcysteine intermediate in catalysis. Cys-417 functions as the Cysteine radical intermediate in the catalytic mechanism. The region spanning 645–774 (SPGANPSNKA…LTERVFHEVL (130 aa)) is the Glycine radical domain. Glycine radical is present on Gly-749.

It belongs to the glycyl radical enzyme (GRE) family. PFL subfamily. As to quaternary structure, homodimer.

Its subcellular location is the cytoplasm. It carries out the reaction formate + acetyl-CoA = pyruvate + CoA. Its pathway is fermentation; pyruvate fermentation; formate from pyruvate: step 1/1. The chain is Formate acetyltransferase (pfl) from Lactococcus lactis subsp. cremoris (strain MG1363).